The primary structure comprises 275 residues: 3-methyl-2-oxobutanoate hydroxymethyltransferase (275 aa).

Residues Asp44 and Asp83 each contribute to the Mg(2+) site. 3-methyl-2-oxobutanoate-binding positions include 44 to 45 (DS), Asp83, and Lys113. Glu115 is a Mg(2+) binding site. Glu182 (proton acceptor) is an active-site residue.

The protein belongs to the PanB family. Homodecamer; pentamer of dimers. Mg(2+) is required as a cofactor.

The protein resides in the cytoplasm. It carries out the reaction 3-methyl-2-oxobutanoate + (6R)-5,10-methylene-5,6,7,8-tetrahydrofolate + H2O = 2-dehydropantoate + (6S)-5,6,7,8-tetrahydrofolate. Its pathway is cofactor biosynthesis; (R)-pantothenate biosynthesis; (R)-pantoate from 3-methyl-2-oxobutanoate: step 1/2. Its function is as follows. Catalyzes the reversible reaction in which hydroxymethyl group from 5,10-methylenetetrahydrofolate is transferred onto alpha-ketoisovalerate to form ketopantoate. This is 3-methyl-2-oxobutanoate hydroxymethyltransferase from Clostridium botulinum (strain Loch Maree / Type A3).